Reading from the N-terminus, the 442-residue chain is Chaperone protein dnaJ A6, chloroplastic (442 aa).

Residues 1–82 (MAIIQLGSTC…PRRGSRFTVR (82 aa)) constitute a chloroplast transit peptide. The J domain occupies 86-150 (DYYSVLGVSK…EKKSLYDRYG (65 aa)). Residues 211–292 (GMEKEIEISR…CSGDGRVRKT (82 aa)) form a CR-type zinc finger. Positions 224, 227, 241, 244, 267, 270, 280, and 283 each coordinate Zn(2+). CXXCXGXG motif repeat units follow at residues 224–231 (CGTCEGSG), 241–248 (CTTCGGQG), 267–274 (CSSCNGTG), and 280–287 (CGTCSGDG).

The protein belongs to the DnaJ family.

The protein localises to the plastid. It localises to the chloroplast. May function together with HSC70 chaperone to assist protein folding and prevent protein aggregation during heat stress in the chloroplast. This Arabidopsis thaliana (Mouse-ear cress) protein is Chaperone protein dnaJ A6, chloroplastic.